A 361-amino-acid polypeptide reads, in one-letter code: Histidinol-phosphate aminotransferase (361 aa).

Lys218 carries the N6-(pyridoxal phosphate)lysine modification.

This sequence belongs to the class-II pyridoxal-phosphate-dependent aminotransferase family. Histidinol-phosphate aminotransferase subfamily. As to quaternary structure, homodimer. The cofactor is pyridoxal 5'-phosphate.

The enzyme catalyses L-histidinol phosphate + 2-oxoglutarate = 3-(imidazol-4-yl)-2-oxopropyl phosphate + L-glutamate. Its pathway is amino-acid biosynthesis; L-histidine biosynthesis; L-histidine from 5-phospho-alpha-D-ribose 1-diphosphate: step 7/9. The protein is Histidinol-phosphate aminotransferase of Dinoroseobacter shibae (strain DSM 16493 / NCIMB 14021 / DFL 12).